A 361-amino-acid chain; its full sequence is Phenylalanine--tRNA ligase alpha subunit (361 aa).

Residue Glu-260 participates in Mg(2+) binding.

The protein belongs to the class-II aminoacyl-tRNA synthetase family. Phe-tRNA synthetase alpha subunit type 1 subfamily. Tetramer of two alpha and two beta subunits. Mg(2+) is required as a cofactor.

It localises to the cytoplasm. The enzyme catalyses tRNA(Phe) + L-phenylalanine + ATP = L-phenylalanyl-tRNA(Phe) + AMP + diphosphate + H(+). This is Phenylalanine--tRNA ligase alpha subunit from Chelativorans sp. (strain BNC1).